The primary structure comprises 365 residues: Phospho-N-acetylmuramoyl-pentapeptide-transferase (365 aa).

10 helical membrane passes run Val-29–Trp-49, Gly-73–Trp-93, Ser-97–Val-117, Ile-133–Ile-153, Ile-171–Ser-191, Gly-202–Val-222, Leu-242–Tyr-262, Ile-266–Leu-286, Tyr-291–Val-311, and Ile-341–Ile-361.

The protein belongs to the glycosyltransferase 4 family. MraY subfamily. It depends on Mg(2+) as a cofactor.

The protein resides in the cell inner membrane. It catalyses the reaction UDP-N-acetyl-alpha-D-muramoyl-L-alanyl-gamma-D-glutamyl-meso-2,6-diaminopimeloyl-D-alanyl-D-alanine + di-trans,octa-cis-undecaprenyl phosphate = di-trans,octa-cis-undecaprenyl diphospho-N-acetyl-alpha-D-muramoyl-L-alanyl-D-glutamyl-meso-2,6-diaminopimeloyl-D-alanyl-D-alanine + UMP. It participates in cell wall biogenesis; peptidoglycan biosynthesis. Functionally, catalyzes the initial step of the lipid cycle reactions in the biosynthesis of the cell wall peptidoglycan: transfers peptidoglycan precursor phospho-MurNAc-pentapeptide from UDP-MurNAc-pentapeptide onto the lipid carrier undecaprenyl phosphate, yielding undecaprenyl-pyrophosphoryl-MurNAc-pentapeptide, known as lipid I. This is Phospho-N-acetylmuramoyl-pentapeptide-transferase from Blochmanniella floridana.